The sequence spans 307 residues: Hepatitis A virus cellular receptor 1 homolog (307 aa).

The signal sequence occupies residues 1–21 (MVQLQVFISGLLLLLPGSVDS). The region spanning 22–124 (YEVVKGVVGH…WFNDQKMTFS (103 aa)) is the Ig-like V-type domain. The Extracellular segment spans residues 22 to 235 (YEVVKGVVGH…RKPQRNPTKG (214 aa)). Intrachain disulfides connect Cys-37–Cys-108, Cys-49–Cys-60, and Cys-55–Cys-107. Residues 129-177 (PEIPTSPPTRPTTTRPTTTRPTTISTRSTHVPTSTRVSTSTPTPEQTQT) are disordered. The segment covering 139–175 (PTTTRPTTTRPTTISTRSTHVPTSTRVSTSTPTPEQT) has biased composition (low complexity). An N-linked (GlcNAc...) asparagine glycan is attached at Asn-206. Residues 236-256 (FYVGMSVAALLLLLLASTVVV) traverse the membrane as a helical segment. The Cytoplasmic segment spans residues 257–307 (TRYIIIRKKMGSLSFVAFHVSKSRALQNAAIVHPRAEDNIYIIEDRSRGAE).

Belongs to the immunoglobulin superfamily. TIM family. As to quaternary structure, interacts with STAM. Interacts with SELPLG. Expressed at a low level in normal kidney but are increased dramatically in postischemic kidney. Expressed in proliferating bromodeoxyuridine-positive and dedifferentiated vimentin-positive epithelial cells in regenerating proximal tubules.

Its subcellular location is the cell membrane. In terms of biological role, phosphatidylserine receptor that plays an important functional role in regulatory B-cells homeostasis including generation, expansion and suppressor functions. As P-selectin/SELPLG ligand, plays a specialized role in activated but not naive T-cell trafficking during inflammatory responses. Controls thereby T-cell accumulation in the inflamed central nervous system (CNS) and the induction of autoimmune disease. Also regulates expression of various anti-inflammatory cytokines and co-inhibitory ligands including IL10. Acts as a regulator of T-cell proliferation. May play a role in kidney injury and repair. This chain is Hepatitis A virus cellular receptor 1 homolog (Havcr1), found in Rattus norvegicus (Rat).